A 459-amino-acid polypeptide reads, in one-letter code: tRNA modification GTPase MnmE (459 aa).

(6S)-5-formyl-5,6,7,8-tetrahydrofolate-binding residues include Arg29, Glu91, and Arg130. The TrmE-type G domain maps to 225-381 (GVKVAIVGRP…LEEALEQLVT (157 aa)). Asn235 is a binding site for K(+). GTP-binding positions include 235 to 240 (NVGKSS), 254 to 260 (TDLPGTT), and 279 to 282 (DTAG). Ser239 lines the Mg(2+) pocket. K(+)-binding residues include Thr254, Leu256, and Thr259. Thr260 is a Mg(2+) binding site. Lys459 contacts (6S)-5-formyl-5,6,7,8-tetrahydrofolate.

The protein belongs to the TRAFAC class TrmE-Era-EngA-EngB-Septin-like GTPase superfamily. TrmE GTPase family. Homodimer. Heterotetramer of two MnmE and two MnmG subunits. Requires K(+) as cofactor.

The protein resides in the cytoplasm. Functionally, exhibits a very high intrinsic GTPase hydrolysis rate. Involved in the addition of a carboxymethylaminomethyl (cmnm) group at the wobble position (U34) of certain tRNAs, forming tRNA-cmnm(5)s(2)U34. In Synechococcus sp. (strain JA-3-3Ab) (Cyanobacteria bacterium Yellowstone A-Prime), this protein is tRNA modification GTPase MnmE.